A 715-amino-acid polypeptide reads, in one-letter code: Epidermal growth factor receptor kinase substrate 8-like protein 2 (715 aa).

Residues 46–202 enclose the PID domain; it reads MHETSQYHVQ…RQRQSILPPP (157 aa). The segment at 183 to 243 is disordered; it reads QTLKGHQEKI…GFRRRESQEE (61 aa). Residues 199-208 are compositionally biased toward pro residues; the sequence is LPPPQGPAPI. Composition is skewed to basic and acidic residues over residues 213-222 and 234-243; these read RGGDSPEAKN and GFRRRESQEE. Ser240 carries the phosphoserine modification. Thr303 is subject to Phosphothreonine. Residues 448–487 are disordered; the sequence is VSPVSRQSIRNSQKHSPTSEPTPPGDALPPVSSPHTHRGY. Ser449 is modified (phosphoserine). Polar residues predominate over residues 451 to 466; it reads VSRQSIRNSQKHSPTS. Thr469 bears the Phosphothreonine mark. In terms of domain architecture, SH3 spans 492–551; that stretch reads AMAKYVKILYDFTARNANELSVLKDEVLEVLEDGRQWWKLRSRSGQAGYVPCNILGEARP. Ser570 is modified (phosphoserine).

This sequence belongs to the EPS8 family. As to quaternary structure, interacts with ABI1. Part of a complex that contains SOS1, ABI1 and EPS8L2. Associates with F-actin. Detected in fibroblasts and placenta.

It localises to the cytoplasm. Its subcellular location is the cell projection. The protein localises to the stereocilium. In terms of biological role, stimulates guanine exchange activity of SOS1. May play a role in membrane ruffling and remodeling of the actin cytoskeleton. In the cochlea, is required for stereocilia maintenance in adult hair cells. The polypeptide is Epidermal growth factor receptor kinase substrate 8-like protein 2 (EPS8L2) (Homo sapiens (Human)).